Consider the following 1040-residue polypeptide: Multidrug resistance protein MdtB (1040 aa).

12 helical membrane-spanning segments follow: residues 16 to 36, 342 to 362, 369 to 389, 396 to 416, 440 to 460, 472 to 492, 537 to 557, 869 to 889, 890 to 910, 911 to 931, 968 to 988, and 998 to 1018; these read FIMR…AGII, DTQF…YVFL, IIPA…MVFL, LTLM…IVVI, IGFT…PLLF, FAVT…TLTP, WATL…WIVI, LIVA…ESFI, HPVT…LALM, LSGS…IGIV, ILMT…STGV, and IGMV…TPVI.

The protein belongs to the resistance-nodulation-cell division (RND) (TC 2.A.6) family. MdtB subfamily. In terms of assembly, part of a tripartite efflux system composed of MdtA, MdtB and MdtC. MdtB forms a heteromultimer with MdtC.

The protein localises to the cell inner membrane. In Enterobacter sp. (strain 638), this protein is Multidrug resistance protein MdtB.